We begin with the raw amino-acid sequence, 122 residues long: Large ribosomal subunit protein uL14 (122 aa).

It belongs to the universal ribosomal protein uL14 family. Part of the 50S ribosomal subunit. Forms a cluster with proteins L3 and L19. In the 70S ribosome, L14 and L19 interact and together make contacts with the 16S rRNA in bridges B5 and B8.

Functionally, binds to 23S rRNA. Forms part of two intersubunit bridges in the 70S ribosome. The polypeptide is Large ribosomal subunit protein uL14 (Borreliella burgdorferi (strain ZS7) (Borrelia burgdorferi)).